Reading from the N-terminus, the 357-residue chain is Peptide chain release factor 1 (357 aa).

Gln234 carries the post-translational modification N5-methylglutamine.

Belongs to the prokaryotic/mitochondrial release factor family. Post-translationally, methylated by PrmC. Methylation increases the termination efficiency of RF1.

The protein resides in the cytoplasm. Peptide chain release factor 1 directs the termination of translation in response to the peptide chain termination codons UAG and UAA. The chain is Peptide chain release factor 1 from Nocardioides sp. (strain ATCC BAA-499 / JS614).